A 601-amino-acid chain; its full sequence is Elongation factor 4 (601 aa).

The 183-residue stretch at 7-189 (SNVRNFSIVA…AIVTRLPPPK (183 aa)) folds into the tr-type G domain. Residues 19 to 24 (DHGKST) and 136 to 139 (NKVD) contribute to the GTP site.

Belongs to the TRAFAC class translation factor GTPase superfamily. Classic translation factor GTPase family. LepA subfamily.

It localises to the cell inner membrane. The enzyme catalyses GTP + H2O = GDP + phosphate + H(+). Its function is as follows. Required for accurate and efficient protein synthesis under certain stress conditions. May act as a fidelity factor of the translation reaction, by catalyzing a one-codon backward translocation of tRNAs on improperly translocated ribosomes. Back-translocation proceeds from a post-translocation (POST) complex to a pre-translocation (PRE) complex, thus giving elongation factor G a second chance to translocate the tRNAs correctly. Binds to ribosomes in a GTP-dependent manner. In Afipia carboxidovorans (strain ATCC 49405 / DSM 1227 / KCTC 32145 / OM5) (Oligotropha carboxidovorans), this protein is Elongation factor 4.